Reading from the N-terminus, the 123-residue chain is Large ribosomal subunit protein uL14 (123 aa).

It belongs to the universal ribosomal protein uL14 family. In terms of assembly, part of the 50S ribosomal subunit. Forms a cluster with proteins L3 and L19. In the 70S ribosome, L14 and L19 interact and together make contacts with the 16S rRNA in bridges B5 and B8.

Binds to 23S rRNA. Forms part of two intersubunit bridges in the 70S ribosome. The polypeptide is Large ribosomal subunit protein uL14 (Yersinia pestis bv. Antiqua (strain Antiqua)).